The sequence spans 642 residues: DNA primase (642 aa).

Residues 41–65 (CPFHNEKSPSFHVRPNHGHFHCFGC) form a CHC2-type zinc finger. Positions 262 to 348 (HQAVVVEGYT…AGKSFVAVAA (87 aa)) constitute a Toprim domain. Mg(2+)-binding residues include Glu268, Asp319, and Asp321. The disordered stretch occupies residues 445 to 480 (NRRSVPERTRRRSVSVEQSPFMQPPGAPADQLAARP).

It belongs to the DnaG primase family. Monomer. Interacts with DnaB. It depends on Zn(2+) as a cofactor. The cofactor is Mg(2+).

The enzyme catalyses ssDNA + n NTP = ssDNA/pppN(pN)n-1 hybrid + (n-1) diphosphate.. RNA polymerase that catalyzes the synthesis of short RNA molecules used as primers for DNA polymerase during DNA replication. The protein is DNA primase of Mycobacterium leprae (strain TN).